A 901-amino-acid chain; its full sequence is MSSPRPSTSSTSSDSGLSVDTTAYPEESKYTSTAPGAGGLSDENRYRDVEEGEAGADEPFLPSAKKQAASGSRTSRLIWGLVILCVAGWLWGLVLFVTQNRSAQQSVSEALQSHESGAISGSSSSGKPVTLEQVLTGQWLPRSHAVSWIAGPNGEDGLLVEQGEDQGKGYLRVDDIRSRKGDATSQESRVLMEKAIVQVDGRTIFPVSTWPSPNLNKVLLLSEREKNWRHSFTGKYWIFDVATQTAQPLDPSNPDGRVQLAIWSPTSDMVAFVRDNNLYLRRLSSKEVVPITKDGGADLFYGIPDWVYEEEVFSGNSVTWWSGDGKYVAFLRTNETAVPEFPVQYYLSRPSGKRPPPGLEDYPEVREIKYPKAGAPNPVVSLQFYDVEKQEVFSIEAPDDFEDDDRIVIEIVWGTEGKILVRATNRESDVLKVFLFDTKARTSKLVRTENVADIDGGWVEPTQYTWFIPADPSNGRPHDGYLDTVIHEGYEHLGYFTPLDNSEPILLTQGEWEVVDAPTAVDLRKGIVYFISTKESPTERHLYQVNLDGSNLKPLTDTSKPGYYDVSFSHGTGYALLSYRGPSIPWQAIVNTETDELKYEETIEDNAGLARMVDSYALPTEIYQNVTIDGFTLQVVERRPPHFNPAKKYPVLFYLYNGPRSQTVDRKFSIDFQSYVASSLGYIVVTVDGRGTGFSGRKTRCIVRGNLGYYEAYDQITTANLWGEKPYVDETRMSIWGWSYGGFMTLKTLEQDAGQTFQYGMAVAPVTDWRHYDSIYTERYMHTPAHNPNGYDNTSITDMTALQQTVRFLVIHGASDDNVHIQNTLVLVDKLDLAGVQNYDLHFYPDSDHSINFHNAHRMVYERLSSWLVNAFNDEWHRIADPVPDDSMWEKVKRSLPMLVN.

Positions 1–22 (MSSPRPSTSSTSSDSGLSVDTT) are enriched in low complexity. The tract at residues 1 to 67 (MSSPRPSTSS…EPFLPSAKKQ (67 aa)) is disordered. Residues 1–76 (MSSPRPSTSS…QAASGSRTSR (76 aa)) lie on the Cytoplasmic side of the membrane. The helical; Signal-anchor for type II membrane protein transmembrane segment at 77–97 (LIWGLVILCVAGWLWGLVLFV) threads the bilayer. The Vacuolar segment spans residues 98-901 (TQNRSAQQSV…VKRSLPMLVN (804 aa)). Residues asparagine 334 and asparagine 625 are each glycosylated (N-linked (GlcNAc...) asparagine). Residue serine 739 is the Charge relay system of the active site. Asparagine 793 carries N-linked (GlcNAc...) asparagine glycosylation. Residues aspartate 816 and histidine 849 each act as charge relay system in the active site.

Belongs to the peptidase S9B family.

The protein localises to the vacuole membrane. The catalysed reaction is Release of an N-terminal dipeptide, Xaa-Yaa-|-Zaa-, from a polypeptide, preferentially when Yaa is Pro, provided Zaa is neither Pro nor hydroxyproline.. In terms of biological role, type IV dipeptidyl-peptidase which removes N-terminal dipeptides sequentially from polypeptides having unsubstituted N-termini provided that the penultimate residue is proline. This is Dipeptidyl-aminopeptidase B (dapB) from Aspergillus niger.